The sequence spans 835 residues: Leucine--tRNA ligase (835 aa).

Residues 36-46 carry the 'HIGH' region motif; that stretch reads PYPSGKIHVGH. A 'KMSKS' region motif is present at residues 602–606; it reads KMSKS. An ATP-binding site is contributed by Lys605.

This sequence belongs to the class-I aminoacyl-tRNA synthetase family.

It is found in the cytoplasm. The catalysed reaction is tRNA(Leu) + L-leucine + ATP = L-leucyl-tRNA(Leu) + AMP + diphosphate. The protein is Leucine--tRNA ligase of Rickettsia rickettsii (strain Iowa).